Consider the following 203-residue polypeptide: MSTRRRTLLKVIILGDSGVGKTSLMNQYVNNKFSQQYKATIGADFVTKELQIDDRLVTLQIWDTAGQERFQSLGVAFYRGADCCVLVYDVNHLKSFESLDNWHNEFLTRASPRDPMAFPFILLGNKVDIDGGNSRVVSEKKAREWCAEKGNIVYFETSAKEDYNVDDSFLCITKLALANERDQDIYFQPDTGSVPEQRGGCAC.

15–22 (GDSGVGKT) contributes to the GTP binding site. The short motif at 37 to 45 (YKATIGADF) is the Effector region element. GTP contacts are provided by residues 63-67 (DTAGQ), 125-128 (NKVD), and 158-159 (SA). S-geranylgeranyl cysteine attachment occurs at residues C201 and C203. Residue C203 is modified to Cysteine methyl ester.

The protein belongs to the small GTPase superfamily. Rab family. Interacts with VPS39. As to expression, expressed in xylem cells of inflorescence stems.

The protein resides in the cell membrane. Intracellular vesicle trafficking and protein transport. Functions in autophagy. Involved in xylem and tracheary element differentiation. The protein is Ras-related protein RABG3b (RABG3B) of Arabidopsis thaliana (Mouse-ear cress).